The primary structure comprises 271 residues: Putative pyruvate, phosphate dikinase regulatory protein (271 aa).

Position 151-158 (151-158 (GISRTSKT)) interacts with ADP.

Belongs to the pyruvate, phosphate/water dikinase regulatory protein family. PDRP subfamily.

The catalysed reaction is N(tele)-phospho-L-histidyl/L-threonyl-[pyruvate, phosphate dikinase] + ADP = N(tele)-phospho-L-histidyl/O-phospho-L-threonyl-[pyruvate, phosphate dikinase] + AMP + H(+). It carries out the reaction N(tele)-phospho-L-histidyl/O-phospho-L-threonyl-[pyruvate, phosphate dikinase] + phosphate + H(+) = N(tele)-phospho-L-histidyl/L-threonyl-[pyruvate, phosphate dikinase] + diphosphate. In terms of biological role, bifunctional serine/threonine kinase and phosphorylase involved in the regulation of the pyruvate, phosphate dikinase (PPDK) by catalyzing its phosphorylation/dephosphorylation. This is Putative pyruvate, phosphate dikinase regulatory protein from Streptococcus uberis (strain ATCC BAA-854 / 0140J).